A 238-amino-acid polypeptide reads, in one-letter code: Membrane protein 2 (238 aa).

The protein belongs to the varicellovirus ORF2 protein family. In terms of processing, phosphorylated by host.

Its subcellular location is the host membrane. The protein is Membrane protein 2 of Varicella-zoster virus (strain Dumas) (HHV-3).